Here is a 678-residue protein sequence, read N- to C-terminus: UvrABC system protein B (678 aa).

The Helicase ATP-binding domain occupies 26-185 (EGLEDGEAFQ…LTTMQYTRND (160 aa)). 39–46 (GVTGSGKT) is a binding site for ATP. Positions 92–115 (YYDYYQPEAYVPASDTYIAKDSSV) match the Beta-hairpin motif. A Helicase C-terminal domain is found at 430-596 (QVDDLLGEIR…KLNKKITDIL (167 aa)). Residues 597–630 (EDSPYAPKPGASAAKLKAAEADGEYSPQEMQRMT) form a disordered region. One can recognise a UVR domain in the interval 635–670 (ASEIKRMEKQMYQAAKDLDFELAAKLRDDLKRLKSS).

Belongs to the UvrB family. Forms a heterotetramer with UvrA during the search for lesions. Interacts with UvrC in an incision complex.

It is found in the cytoplasm. Functionally, the UvrABC repair system catalyzes the recognition and processing of DNA lesions. A damage recognition complex composed of 2 UvrA and 2 UvrB subunits scans DNA for abnormalities. Upon binding of the UvrA(2)B(2) complex to a putative damaged site, the DNA wraps around one UvrB monomer. DNA wrap is dependent on ATP binding by UvrB and probably causes local melting of the DNA helix, facilitating insertion of UvrB beta-hairpin between the DNA strands. Then UvrB probes one DNA strand for the presence of a lesion. If a lesion is found the UvrA subunits dissociate and the UvrB-DNA preincision complex is formed. This complex is subsequently bound by UvrC and the second UvrB is released. If no lesion is found, the DNA wraps around the other UvrB subunit that will check the other stand for damage. This chain is UvrABC system protein B, found in Hydrogenovibrio crunogenus (strain DSM 25203 / XCL-2) (Thiomicrospira crunogena).